The following is a 137-amino-acid chain: Small ribosomal subunit protein uS11 (137 aa).

The tract at residues 1 to 30 (MAQAKKGGAPKKGQKTRRREKKNVPHGAAH) is disordered. The segment covering 8 to 21 (GAPKKGQKTRRREK) has biased composition (basic residues).

It belongs to the universal ribosomal protein uS11 family. In terms of assembly, part of the 30S ribosomal subunit. Interacts with proteins S7 and S18. Binds to IF-3.

Located on the platform of the 30S subunit, it bridges several disparate RNA helices of the 16S rRNA. Forms part of the Shine-Dalgarno cleft in the 70S ribosome. The protein is Small ribosomal subunit protein uS11 of Mycolicibacterium vanbaalenii (strain DSM 7251 / JCM 13017 / BCRC 16820 / KCTC 9966 / NRRL B-24157 / PYR-1) (Mycobacterium vanbaalenii).